A 284-amino-acid polypeptide reads, in one-letter code: Undecaprenyl-diphosphatase (284 aa).

8 helical membrane-spanning segments follow: residues 7–27, 44–64, 90–110, 116–136, 167–187, 197–217, 229–249, and 259–279; these read IILGIIEGITEWLPISSTGHL, EMFDVVIQLGAILSVVVLYFH, LWLKVLIAALPAAIIGLPLND, FYHFVPVAFMLIIYGVAFIVI, VLSLLPGTSRSGATIVGALLI, FTFFLGIPVMFGASFIKILHF, FGVLLVACLVAFGVSMVAIKF, and FTFFGKYRIVLGIVLLIYAAF.

The protein belongs to the UppP family.

It is found in the cell membrane. The enzyme catalyses di-trans,octa-cis-undecaprenyl diphosphate + H2O = di-trans,octa-cis-undecaprenyl phosphate + phosphate + H(+). Functionally, catalyzes the dephosphorylation of undecaprenyl diphosphate (UPP). Confers resistance to bacitracin. The polypeptide is Undecaprenyl-diphosphatase (Lactococcus lactis subsp. cremoris (strain MG1363)).